The sequence spans 110 residues: FMRFamide-like neuropeptides 11 (110 aa).

A signal peptide spans 1 to 22; it reads MTQFSALALLLIVFVAASFAQS. Residues 23 to 29 constitute a propeptide that is removed on maturation; sequence YDDVSAE. Phenylalanine amide is present on residues phenylalanine 40 and phenylalanine 54. The tract at residues 60–85 is disordered; it reads LDEEDFAPESPLQGKRNGAPQPFVRF. Glutamine amide is present on glutamine 72. Phenylalanine 85 carries the post-translational modification Phenylalanine amide. A propeptide spanning residues 88-110 is cleaved from the precursor; it reads SGQLDHMHDLLSTLQKLKFANNK.

The protein belongs to the FARP (FMRFamide related peptide) family. In terms of tissue distribution, each flp gene is expressed in a distinct set of neurons. Flp-11 is expressed in the DD, VD and DVB motor neurons, the PVC and URX interneurons, and the AUA, BAG, DA, LUA, and SAB neurons. Also expressed in head muscle, socket or sheath cells and uterine cells. Expressed exclusively in PHC sensory neurons in males. Expressed in AVK and RIS interneurons.

It is found in the secreted. In terms of biological role, FMRFamides and FMRFamide-like peptides are neuropeptides. Induces sleep-like quiescence behavior following release from RIS interneuron. Helps to sustain locomotion stop after gamma-aminobutyric acid (GABA) induces fast slowing response. Inhibits the late-stage body bend swimming frequency in animals through several receptors including frpr-3, npr-4 and npr-22. Functionally, potent inhibitor of the activity of the dissected pharyngeal myogenic muscle system. Acts as a ligand for the npr-22 receptor in vitro. Acts as a ligand for the npr-22 receptor in vitro. The protein is FMRFamide-like neuropeptides 11 of Caenorhabditis elegans.